Consider the following 346-residue polypeptide: Aspartate-semialdehyde dehydrogenase (346 aa).

Residues 13–16 (TGAV) and 41–42 (RS) contribute to the NADP(+) site. S98 carries the post-translational modification Phosphoserine. Phosphate is bound at residue R101. The active-site Acyl-thioester intermediate is C130. Y146 is modified (phosphotyrosine). Q157 contributes to the substrate binding site. 160-161 (SG) is a binding site for NADP(+). Phosphate is bound at residue K221. Substrate is bound at residue R243. Residue H250 is the Proton acceptor of the active site. N324 lines the NADP(+) pocket.

The protein belongs to the aspartate-semialdehyde dehydrogenase family. In terms of assembly, homodimer.

It catalyses the reaction L-aspartate 4-semialdehyde + phosphate + NADP(+) = 4-phospho-L-aspartate + NADPH + H(+). It participates in amino-acid biosynthesis; L-lysine biosynthesis via DAP pathway; (S)-tetrahydrodipicolinate from L-aspartate: step 2/4. Its pathway is amino-acid biosynthesis; L-methionine biosynthesis via de novo pathway; L-homoserine from L-aspartate: step 2/3. The protein operates within amino-acid biosynthesis; L-threonine biosynthesis; L-threonine from L-aspartate: step 2/5. In terms of biological role, catalyzes the NADPH-dependent formation of L-aspartate-semialdehyde (L-ASA) by the reductive dephosphorylation of L-aspartyl-4-phosphate. This chain is Aspartate-semialdehyde dehydrogenase, found in Bacillus subtilis (strain 168).